The primary structure comprises 206 residues: Ras-related protein Ral-B (206 aa).

21–29 (GSGGVGKSA) lines the GTP pocket. An Effector region motif is present at residues 43 to 51 (YEPTKADSY). GTP-binding positions include 68–72 (DTAGQ), 128–131 (NKSD), and 158–160 (SAK). Residues 180–189 (KMSENKDKNG) show a composition bias toward basic and acidic residues. The segment at 180-206 (KMSENKDKNGKKSSKNKKSFKERCCLL) is disordered. Cysteine methyl ester is present on Cys203. A lipid anchor (S-geranylgeranyl cysteine) is attached at Cys203. Residues 204–206 (CLL) constitute a propeptide, removed in mature form.

The protein belongs to the small GTPase superfamily. Ras family. Interacts with EXOC2/Sec5 and EXOC8/Exo84. Interacts (via effector domain) with RALBP1. Prenylation is essential for membrane localization. In terms of processing, the farnesylated form confers resistance to the proapoptotic and anti-anchorage-dependent growth effects of some geranylgeranyltransferase I inhibitors.

The protein localises to the cell membrane. It is found in the midbody. The enzyme catalyses GTP + H2O = GDP + phosphate + H(+). With respect to regulation, alternates between an inactive form bound to GDP and an active form bound to GTP. Activated by a guanine nucleotide-exchange factor (GEF) and inactivated by a GTPase-activating protein (GAP). Its function is as follows. Multifunctional GTPase involved in a variety of cellular processes including gene expression, cell migration, cell proliferation, oncogenic transformation and membrane trafficking. Accomplishes its multiple functions by interacting with distinct downstream effectors. Acts as a GTP sensor for GTP-dependent exocytosis of dense core vesicles. Required both to stabilize the assembly of the exocyst complex and to localize functional exocyst complexes to the leading edge of migrating cells. Required for suppression of apoptosis. In late stages of cytokinesis, upon completion of the bridge formation between dividing cells, mediates exocyst recruitment to the midbody to drive abscission. Involved in ligand-dependent receptor mediated endocytosis of the EGF and insulin receptors. This chain is Ras-related protein Ral-B (RALB), found in Pongo abelii (Sumatran orangutan).